The sequence spans 207 residues: Large ribosomal subunit protein uL4 (207 aa).

Positions 49–78 (HAVKNRSAVRGGGKKPWRQKGTGRARQGSI) are disordered. The span at 60-71 (GGKKPWRQKGTG) shows a compositional bias: basic residues.

The protein belongs to the universal ribosomal protein uL4 family. Part of the 50S ribosomal subunit.

One of the primary rRNA binding proteins, this protein initially binds near the 5'-end of the 23S rRNA. It is important during the early stages of 50S assembly. It makes multiple contacts with different domains of the 23S rRNA in the assembled 50S subunit and ribosome. Functionally, forms part of the polypeptide exit tunnel. The protein is Large ribosomal subunit protein uL4 of Ligilactobacillus salivarius (strain UCC118) (Lactobacillus salivarius).